A 161-amino-acid polypeptide reads, in one-letter code: uncharacterized protein (161 aa).

This is an uncharacterized protein from Saccharomyces cerevisiae (strain ATCC 204508 / S288c) (Baker's yeast).